A 225-amino-acid polypeptide reads, in one-letter code: Adenylate kinase (225 aa).

10–15 (GSGKGT) provides a ligand contact to ATP. An NMP region spans residues 30–59 (ESGAIFRENISKGTEIGKKAKEYIDRGDLV). AMP contacts are provided by residues Ser31, Arg36, 57–59 (DLV), 85–88 (GFPR), and Gln92. Positions 126-165 (GRRLCENDNNHPNNIFIDAIKPDGDKCRVCGGALSARSDD) are LID. Arg127 is an ATP binding site. AMP-binding residues include Arg162 and Arg174. Residue Pro211 coordinates ATP.

Belongs to the adenylate kinase family. In terms of assembly, monomer.

It is found in the cytoplasm. It catalyses the reaction AMP + ATP = 2 ADP. Its pathway is purine metabolism; AMP biosynthesis via salvage pathway; AMP from ADP: step 1/1. Catalyzes the reversible transfer of the terminal phosphate group between ATP and AMP. Plays an important role in cellular energy homeostasis and in adenine nucleotide metabolism. This chain is Adenylate kinase, found in Desulfatibacillum aliphaticivorans.